The primary structure comprises 225 residues: MALWGWRGVGRRPTFFVFASLAPIGRDFLRRNGDDARMMGHLEKLLAPTLDAMGYEVVRVTLLGSQNPTLQVMAERLDGVAMTVSDCETISRALGALLDVEDPIAGRYSLEISSPGIDRPLTRPKDYARFAGHEARIETDRLIEGHRRMKGLLLGIDEDRTVRLRLIEGKAAEDGTLPEVEIPFGAIVKAKLLLTDALIAKALKDAEALADEGEAAGGAVEGGVA.

It belongs to the RimP family.

The protein resides in the cytoplasm. In terms of biological role, required for maturation of 30S ribosomal subunits. The protein is Ribosome maturation factor RimP of Rhodospirillum rubrum (strain ATCC 11170 / ATH 1.1.1 / DSM 467 / LMG 4362 / NCIMB 8255 / S1).